A 255-amino-acid chain; its full sequence is DNA repair protein RecO (255 aa).

Belongs to the RecO family.

Functionally, involved in DNA repair and RecF pathway recombination. In Acidithiobacillus ferrooxidans (strain ATCC 23270 / DSM 14882 / CIP 104768 / NCIMB 8455) (Ferrobacillus ferrooxidans (strain ATCC 23270)), this protein is DNA repair protein RecO.